The sequence spans 206 residues: Ribosomal RNA small subunit methyltransferase G (206 aa).

Residues glycine 71, phenylalanine 76, 122 to 123 (AE), and arginine 135 each bind S-adenosyl-L-methionine.

The protein belongs to the methyltransferase superfamily. RNA methyltransferase RsmG family.

Its subcellular location is the cytoplasm. In terms of biological role, specifically methylates the N7 position of a guanine in 16S rRNA. The chain is Ribosomal RNA small subunit methyltransferase G from Bacteroides thetaiotaomicron (strain ATCC 29148 / DSM 2079 / JCM 5827 / CCUG 10774 / NCTC 10582 / VPI-5482 / E50).